The primary structure comprises 434 residues: BEN domain-containing protein 7 (434 aa).

Residues lysine 16, lysine 56, and lysine 85 each participate in a glycyl lysine isopeptide (Lys-Gly) (interchain with G-Cter in SUMO2) cross-link. Disordered stretches follow at residues 96 to 151 (PQRS…SNGE) and 212 to 262 (SRKR…ERTS). Over residues 97–150 (QRSNSSTEASQGLHSNSRGAWNELPTQSGQFSGQSGPRSRTFQTQPHISASSNG) the composition is skewed to polar residues. Positions 212-222 (SRKRNKKKKVL) are enriched in basic residues. Lysine 244 is covalently cross-linked (Glycyl lysine isopeptide (Lys-Gly) (interchain with G-Cter in SUMO2)). Residues 289 to 399 (GFDVFMPKSQ…RRLKRGSAEV (111 aa)) form the BEN domain. A Phosphothreonine modification is found at threonine 326. Serine 330 carries the phosphoserine modification. Residues 414 to 434 (TGHTFVIKRETPEDPEPGSVA) form a disordered region.

In Mus musculus (Mouse), this protein is BEN domain-containing protein 7 (Bend7).